The chain runs to 237 residues: Uridylate kinase (237 aa).

12-15 lines the ATP pocket; that stretch reads KLSG. Positions 20-25 are involved in allosteric activation by GTP; that stretch reads GENGYG. A UMP-binding site is contributed by G54. Positions 55 and 59 each coordinate ATP. Residues D72 and 133–140 contribute to the UMP site; that span reads TGNPYFST. Positions 166 and 169 each coordinate ATP.

It belongs to the UMP kinase family. In terms of assembly, homohexamer.

The protein resides in the cytoplasm. The catalysed reaction is UMP + ATP = UDP + ADP. It functions in the pathway pyrimidine metabolism; CTP biosynthesis via de novo pathway; UDP from UMP (UMPK route): step 1/1. Its activity is regulated as follows. Allosterically activated by GTP. Inhibited by UTP. Functionally, catalyzes the reversible phosphorylation of UMP to UDP. The protein is Uridylate kinase of Clostridium tetani (strain Massachusetts / E88).